The sequence spans 578 residues: Paraneoplastic antigen Ma6F (578 aa).

Disordered regions lie at residues 106 to 221 (AQPQ…AGAA) and 441 to 578 (AAPV…PPGK). The span at 112–129 (AVARGAGEAGAAGEAGSV) shows a compositional bias: low complexity. Over residues 147–159 (GGIGEAGGVGEAG) the composition is skewed to gly residues. A compositionally biased stretch (low complexity) spans 160-173 (AAGEAGAAGEAGAA). Positions 174-211 (GEAGGAGEAGGAGEAGGAGEEGGTGEEGGAGEAGGAGE) are enriched in gly residues. Residues 449 to 461 (PAAAQASPAQGDA) are compositionally biased toward low complexity. Composition is skewed to acidic residues over residues 462 to 473 (SEADPGAEDADE) and 556 to 566 (EESENEDEDGA).

The polypeptide is Paraneoplastic antigen Ma6F (Homo sapiens (Human)).